We begin with the raw amino-acid sequence, 512 residues long: D-alanine--D-alanyl carrier protein ligase (512 aa).

An ATP-binding site is contributed by 152-153 (TS). Asp-199 is a binding site for D-alanine. ATP is bound at residue 294–299 (NAYGPT). Residue Val-303 coordinates D-alanine. ATP contacts are provided by residues Asp-385, 397-400 (YGGR), and Lys-499. Residue Lys-499 coordinates D-alanine.

This sequence belongs to the ATP-dependent AMP-binding enzyme family. DltA subfamily.

It localises to the cytoplasm. The catalysed reaction is holo-[D-alanyl-carrier protein] + D-alanine + ATP = D-alanyl-[D-alanyl-carrier protein] + AMP + diphosphate. It functions in the pathway cell wall biogenesis; lipoteichoic acid biosynthesis. Functionally, catalyzes the first step in the D-alanylation of lipoteichoic acid (LTA), the activation of D-alanine and its transfer onto the D-alanyl carrier protein (Dcp) DltC. In an ATP-dependent two-step reaction, forms a high energy D-alanyl-AMP intermediate, followed by transfer of the D-alanyl residue as a thiol ester to the phosphopantheinyl prosthetic group of the Dcp. D-alanylation of LTA plays an important role in modulating the properties of the cell wall in Gram-positive bacteria, influencing the net charge of the cell wall. The protein is D-alanine--D-alanyl carrier protein ligase of Streptococcus pyogenes serotype M28 (strain MGAS6180).